Consider the following 339-residue polypeptide: Thymidine kinase (339 aa).

11-18 contacts ATP; that stretch reads GAFGIGKT. The active-site Proton acceptor is the glutamate 39. 2 residues coordinate substrate: tyrosine 59 and glutamine 83. Arginine 176 lines the ATP pocket. Arginine 182 is a binding site for substrate.

It belongs to the herpesviridae thymidine kinase family. Homodimer.

The catalysed reaction is thymidine + ATP = dTMP + ADP + H(+). In terms of biological role, catalyzes the transfer of the gamma-phospho group of ATP to thymidine to generate dTMP in the salvage pathway of pyrimidine synthesis. The dTMP serves as a substrate for DNA polymerase during viral DNA replication. Allows the virus to be reactivated and to grow in non-proliferative cells lacking a high concentration of phosphorylated nucleic acid precursors. This chain is Thymidine kinase, found in Amazona oratrix (yellow-headed parrot).